Reading from the N-terminus, the 305-residue chain is Aspartate carbamoyltransferase catalytic subunit (305 aa).

Carbamoyl phosphate contacts are provided by R58 and T59. K86 contacts L-aspartate. Residues R108, H136, and Q139 each coordinate carbamoyl phosphate. R169 and R223 together coordinate L-aspartate. Residues G264 and P265 each contribute to the carbamoyl phosphate site.

This sequence belongs to the aspartate/ornithine carbamoyltransferase superfamily. ATCase family. In terms of assembly, heterododecamer (2C3:3R2) of six catalytic PyrB chains organized as two trimers (C3), and six regulatory PyrI chains organized as three dimers (R2).

The catalysed reaction is carbamoyl phosphate + L-aspartate = N-carbamoyl-L-aspartate + phosphate + H(+). Its pathway is pyrimidine metabolism; UMP biosynthesis via de novo pathway; (S)-dihydroorotate from bicarbonate: step 2/3. Catalyzes the condensation of carbamoyl phosphate and aspartate to form carbamoyl aspartate and inorganic phosphate, the committed step in the de novo pyrimidine nucleotide biosynthesis pathway. This chain is Aspartate carbamoyltransferase catalytic subunit, found in Syntrophobacter fumaroxidans (strain DSM 10017 / MPOB).